The primary structure comprises 226 residues: MYSIKCDDNKAMPRERLMRLGAESLSNQELLAILLRTGNKEKHVLELSSYLLSHLDSLADFKKMSLQELQHLAGIGKVKAIEIKAMIELVSRILAIDKTLTDSVLTSVQVAEKMMAALGDKKQEHLVVLYLDNQNRIIEEKTIFIGTVRRSLAEPREILYYACKNMATSLIVIHNHPSGNIEPSSNDYCFTEKIKRSCEDLGIICLDHIIVSYKDYYSFREKSTLF.

The 123-residue stretch at 103–225 folds into the MPN domain; sequence SVLTSVQVAE…YYSFREKSTL (123 aa). Zn(2+)-binding residues include His174, His176, and Asp187. Residues 174 to 187 carry the JAMM motif motif; sequence HNHPSGNIEPSSND.

This sequence belongs to the UPF0758 family.

This Streptococcus pyogenes serotype M6 (strain ATCC BAA-946 / MGAS10394) protein is UPF0758 protein M6_Spy0838.